Consider the following 309-residue polypeptide: Ribosomal RNA small subunit methyltransferase H (309 aa).

S-adenosyl-L-methionine is bound by residues 33–35 (GGH), Asp53, Phe79, Asp100, and Gln107.

Belongs to the methyltransferase superfamily. RsmH family.

The protein localises to the cytoplasm. It carries out the reaction cytidine(1402) in 16S rRNA + S-adenosyl-L-methionine = N(4)-methylcytidine(1402) in 16S rRNA + S-adenosyl-L-homocysteine + H(+). Specifically methylates the N4 position of cytidine in position 1402 (C1402) of 16S rRNA. The polypeptide is Ribosomal RNA small subunit methyltransferase H (Clostridium botulinum (strain Kyoto / Type A2)).